Reading from the N-terminus, the 267-residue chain is Soluble interferon gamma receptor OPG193 (267 aa).

An N-terminal signal peptide occupies residues methionine 1 to alanine 17. 2 N-linked (GlcNAc...) asparagine; by host glycosylation sites follow: asparagine 42 and asparagine 150.

Belongs to the type II cytokine receptor family. Homodimer. Interacts with host IFNG.

The protein resides in the secreted. Functionally, counteracts the antiviral effects of host IFN-gamma. Acts as a soluble IFN-gamma receptor and thus inhibits the interaction between host IFN-gamma and its receptor. The polypeptide is Soluble interferon gamma receptor OPG193 (OPG193) (Cynomys gunnisoni (Gunnison's prairie dog)).